An 85-amino-acid chain; its full sequence is U1-theraphotoxin-Hs1a (85 aa).

The N-terminal stretch at 1 to 22 is a signal peptide; it reads MKVTLIAILTCAAVLVLHTTAA. Positions 23–48 are excised as a propeptide; that stretch reads EELEAESQLMEVGMPDTELAAVDEER. Cystine bridges form between C52–C66, C56–C77, and C71–C82.

Heterodimer composed of the two variants Ile-58 and Gln-58. In terms of tissue distribution, expressed by the venom gland.

The protein localises to the secreted. In terms of biological role, lethal neurotoxin that blocks neuromuscular transmission. Acts cooperatively to potentiate the activity of huwentoxin-I. This toxin is active against insects. The polypeptide is U1-theraphotoxin-Hs1a (Cyriopagopus schmidti (Chinese bird spider)).